The following is a 130-amino-acid chain: Small ribosomal subunit protein uS8 (130 aa).

It belongs to the universal ribosomal protein uS8 family. In terms of assembly, part of the 30S ribosomal subunit. Contacts proteins S5 and S12.

In terms of biological role, one of the primary rRNA binding proteins, it binds directly to 16S rRNA central domain where it helps coordinate assembly of the platform of the 30S subunit. The polypeptide is Small ribosomal subunit protein uS8 (Shewanella sediminis (strain HAW-EB3)).